Here is a 517-residue protein sequence, read N- to C-terminus: Serine hydroxymethyltransferase 1, mitochondrial (517 aa).

The transit peptide at 1 to 30 directs the protein to the mitochondrion; that stretch reads MAMAMALRRLSSSIDKPIRPLIRSTSCYMS. Lys-286 carries the post-translational modification N6-(pyridoxal phosphate)lysine.

This sequence belongs to the SHMT family. As to quaternary structure, homotetramer. Interacts with GLU1. Interacts with UBP16. Pyridoxal 5'-phosphate serves as cofactor. Post-translationally, ubiquitinated. Ubiquitous. Mostly expressed in leaves, less abundant in stems, flowers and siliques, and barely detectable in roots.

It is found in the mitochondrion. The protein resides in the cytoplasm. It catalyses the reaction (6R)-5,10-methylene-5,6,7,8-tetrahydrofolate + glycine + H2O = (6S)-5,6,7,8-tetrahydrofolate + L-serine. It functions in the pathway one-carbon metabolism; tetrahydrofolate interconversion. Its function is as follows. Functions in the photorespiratory pathway in catalyzing the interconversion of serine and glycine. Involved in controlling cell damage caused by abiotic stress, such as high light and salt and the hypersensitive defense response of plants. The polypeptide is Serine hydroxymethyltransferase 1, mitochondrial (Arabidopsis thaliana (Mouse-ear cress)).